Here is a 57-residue protein sequence, read N- to C-terminus: MLGWVVTFLVVALIAGLLGFGGIAGASIEIAKIIFFIAIVLFLVSAVISIFRGRTRV.

The next 2 helical transmembrane spans lie at 4–24 (WVVTFLVVALIAGLLGFGGIA) and 30–50 (IAKIIFFIAIVLFLVSAVISI).

This sequence belongs to the UPF0391 family.

It is found in the cell membrane. The polypeptide is UPF0391 membrane protein RPA3505 (Rhodopseudomonas palustris (strain ATCC BAA-98 / CGA009)).